The sequence spans 210 residues: Large ribosomal subunit protein bL25 (210 aa).

Residues 179–210 form a disordered region; sequence LPPQQEEEIHSGEQQEPGHPDAEEGRETTPES. Over residues 185 to 210 the composition is skewed to basic and acidic residues; the sequence is EEIHSGEQQEPGHPDAEEGRETTPES.

It belongs to the bacterial ribosomal protein bL25 family. CTC subfamily. Part of the 50S ribosomal subunit; part of the 5S rRNA/L5/L18/L25 subcomplex. Contacts the 5S rRNA. Binds to the 5S rRNA independently of L5 and L18.

Its function is as follows. This is one of the proteins that binds to the 5S RNA in the ribosome where it forms part of the central protuberance. This is Large ribosomal subunit protein bL25 from Geobacillus sp. (strain WCH70).